We begin with the raw amino-acid sequence, 294 residues long: MFKKRGRQTVLIAAVLAFFTASSPLLARTQGEPTQVQQKLAALEKQSGGRLGVALINTADRSQILYRGDERFAMCSTSKTMVAAAVLKQSETQHDILQQKMVIKKADLTNWNPVTEKYVDKEMTLAELSAATLQYSDNTAMNKLLEHLGGTSNVTAFARSIGDTTFRLDRKEPELNTAIPGDERDTTCPLAMAKSLHKLTLGDALAGAQRAQLVEWLKGNTTGGQSIRAGLPEGWVVGDKTGAGDYGTTNDIAVIWPEDRAPLILVTYFTQPQQDAKGRKDILAAAAKIVTEGL.

Residues 1–27 (MFKKRGRQTVLIAAVLAFFTASSPLLA) form the signal peptide. The active-site Acyl-ester intermediate is Ser-76. Glu-174 (proton acceptor) is an active-site residue. A substrate-binding site is contributed by 240 to 242 (KTG).

The protein belongs to the class-A beta-lactamase family.

The enzyme catalyses a beta-lactam + H2O = a substituted beta-amino acid. The protein is Beta-lactamase of Citrobacter koseri (Citrobacter diversus).